The primary structure comprises 965 residues: Glycine dehydrogenase (decarboxylating) 1 (965 aa).

An N6-(pyridoxal phosphate)lysine modification is found at lysine 713.

The protein belongs to the GcvP family. In terms of assembly, the glycine cleavage system is composed of four proteins: P, T, L and H. It depends on pyridoxal 5'-phosphate as a cofactor.

The enzyme catalyses N(6)-[(R)-lipoyl]-L-lysyl-[glycine-cleavage complex H protein] + glycine + H(+) = N(6)-[(R)-S(8)-aminomethyldihydrolipoyl]-L-lysyl-[glycine-cleavage complex H protein] + CO2. Its function is as follows. The glycine cleavage system catalyzes the degradation of glycine. The P protein binds the alpha-amino group of glycine through its pyridoxal phosphate cofactor; CO(2) is released and the remaining methylamine moiety is then transferred to the lipoamide cofactor of the H protein. This chain is Glycine dehydrogenase (decarboxylating) 1, found in Colwellia psychrerythraea (strain 34H / ATCC BAA-681) (Vibrio psychroerythus).